Here is a 466-residue protein sequence, read N- to C-terminus: Purple acid phosphatase 25 (466 aa).

An N-terminal signal peptide occupies residues 1–21 (MRMNKILLVFVFLSIATVINS). Residue Asp164 coordinates Fe cation. N-linked (GlcNAc...) asparagine glycosylation is present at Asn172. 2 residues coordinate Fe cation: Asp192 and Tyr195. Zn(2+) is bound at residue Asp192. Zn(2+) is bound by residues Asn229 and His314. Residue Asn229 coordinates substrate. His324 functions as the Proton donor in the catalytic mechanism. Position 351 (His351) interacts with Zn(2+). A substrate-binding site is contributed by 351-353 (HVH). Fe cation is bound at residue His353. N-linked (GlcNAc...) asparagine glycans are attached at residues Asn367 and Asn424.

Belongs to the metallophosphoesterase superfamily. Purple acid phosphatase family. As to quaternary structure, homodimer. Fe cation serves as cofactor. It depends on Zn(2+) as a cofactor. In terms of tissue distribution, specifically expressed in flowers.

The protein resides in the secreted. It catalyses the reaction a phosphate monoester + H2O = an alcohol + phosphate. The chain is Purple acid phosphatase 25 (PAP25) from Arabidopsis thaliana (Mouse-ear cress).